Reading from the N-terminus, the 173-residue chain is Succinate dehydrogenase assembly factor 3, mitochondrial (173 aa).

The transit peptide at 1 to 59 (MFRPSTSLALRSTLRQLASASNQPIPPGSEINAVKRTVATILPPIRLYRRIIRAHRRLD) directs the protein to the mitochondrion. The segment at 149-173 (FPPEKQRELAEKAAADAGLSVKKDE) is disordered. Over residues 152–162 (EKQRELAEKAA) the composition is skewed to basic and acidic residues.

It belongs to the complex I LYR family. SDHAF3 subfamily. Interacts with the iron-sulfur protein subunit within the SDH catalytic dimer.

Its subcellular location is the mitochondrion matrix. Plays an essential role in the assembly of succinate dehydrogenase (SDH), an enzyme complex (also referred to as respiratory complex II) that is a component of both the tricarboxylic acid (TCA) cycle and the mitochondrial electron transport chain, and which couples the oxidation of succinate to fumarate with the reduction of ubiquinone (coenzyme Q) to ubiquinol. Promotes maturation of the iron-sulfur protein subunit of the SDH catalytic dimer, protecting it from the deleterious effects of oxidants. May act together with SDHAF1. This chain is Succinate dehydrogenase assembly factor 3, mitochondrial, found in Mycosarcoma maydis (Corn smut fungus).